Reading from the N-terminus, the 152-residue chain is Ribosome maturation factor RimP (152 aa).

Belongs to the RimP family.

The protein resides in the cytoplasm. Its function is as follows. Required for maturation of 30S ribosomal subunits. This Fervidobacterium nodosum (strain ATCC 35602 / DSM 5306 / Rt17-B1) protein is Ribosome maturation factor RimP.